A 431-amino-acid polypeptide reads, in one-letter code: Na(+)-translocating NADH-quinone reductase subunit F (431 aa).

Residues 10 to 30 form a helical membrane-spanning segment; that stretch reads ISIASLVFCVIGLILSGIILI. The 2Fe-2S ferredoxin-type domain maps to 41–133; it reads CKLKINDDDS…DMCLEIEERY (93 aa). Cys-76, Cys-82, Cys-85, and Cys-117 together coordinate [2Fe-2S] cluster. One can recognise an FAD-binding FR-type domain in the interval 136 to 286; the sequence is ASSWEGTVVS…SGPYGESFMK (151 aa).

Belongs to the NqrF family. As to quaternary structure, composed of six subunits; NqrA, NqrB, NqrC, NqrD, NqrE and NqrF. Requires [2Fe-2S] cluster as cofactor. It depends on FAD as a cofactor.

It is found in the cell inner membrane. It carries out the reaction a ubiquinone + n Na(+)(in) + NADH + H(+) = a ubiquinol + n Na(+)(out) + NAD(+). In terms of biological role, NQR complex catalyzes the reduction of ubiquinone-1 to ubiquinol by two successive reactions, coupled with the transport of Na(+) ions from the cytoplasm to the periplasm. The first step is catalyzed by NqrF, which accepts electrons from NADH and reduces ubiquinone-1 to ubisemiquinone by a one-electron transfer pathway. This is Na(+)-translocating NADH-quinone reductase subunit F from Chlamydia caviae (strain ATCC VR-813 / DSM 19441 / 03DC25 / GPIC) (Chlamydophila caviae).